The chain runs to 267 residues: Dihydropteroate synthase (267 aa).

A Pterin-binding domain is found at 1-251 (MTKTKIMGIL…NVELNAKLAK (251 aa)). A Mg(2+)-binding site is contributed by N11. (7,8-dihydropterin-6-yl)methyl diphosphate contacts are provided by residues T51, D84, N103, D167, K203, and 239-241 (RVH).

This sequence belongs to the DHPS family. In terms of assembly, homodimer. Mg(2+) is required as a cofactor.

It catalyses the reaction (7,8-dihydropterin-6-yl)methyl diphosphate + 4-aminobenzoate = 7,8-dihydropteroate + diphosphate. The protein operates within cofactor biosynthesis; tetrahydrofolate biosynthesis; 7,8-dihydrofolate from 2-amino-4-hydroxy-6-hydroxymethyl-7,8-dihydropteridine diphosphate and 4-aminobenzoate: step 1/2. Catalyzes the condensation of para-aminobenzoate (pABA) with 6-hydroxymethyl-7,8-dihydropterin diphosphate (DHPt-PP) to form 7,8-dihydropteroate (H2Pte), the immediate precursor of folate derivatives. This Staphylococcus aureus (strain MW2) protein is Dihydropteroate synthase (folP).